We begin with the raw amino-acid sequence, 593 residues long: MHFSVRLSLLLTLASSLPLVSAIPQHEDQAYTFPSPGRSATANTDPVLEVGRETQRTPSAWTRLRDSLVESVWGLPQRKEGGEWRTRNQVTTASRAPATLQARYGEDVVLRFTIKTQEEVKALVEASNILFLDVWGSHDDWVDIRLSRDVIPSLLGLLPPSLQSSHVPLIRDLAQTIYESYPKTNPSSPSQQGPTTRRFSPSASTSKTKPQETKNIFFQDYQPLSVLLPWMRLLVSMFSSHATLISVGTTAEGRDIPALRVGVHPTNNAQQAPRRRTIVISGGAHAREWISVSTVSYIAYSFITGYGKSRSITKLLEQFDYVFIPTVNPDGYAYTFSTDRLWRKNRQQTSLSFCPGIDLDHSWGYEWDGNATRSNPCSENYAGDQPFEAIEAREIATWARKEVTVNNVQFVAFVDLHSYSQQILYPYGHSCAHLPANLENLEELGAGLAKAIRKTSRENYDVKAACRGIVASSMGDKDADEAVTSSALESTAGSALDWFYHDMDVRFSYQIKLRDRGSYGFLLPREQIVPTGKEIYRAMVAMGKFLVSPHILTGDLNGPHAAEETQNYDDDFEEDEAEEDSDVFRAQGDDMSS.

An N-terminal signal peptide occupies residues 1–22 (MHFSVRLSLLLTLASSLPLVSA). Residues 23-184 (IPQHEDQAYT…QTIYESYPKT (162 aa)) constitute a propeptide that is removed on maturation. Positions 180–210 (SYPKTNPSSPSQQGPTTRRFSPSASTSKTKP) are disordered. Positions 182 to 210 (PKTNPSSPSQQGPTTRRFSPSASTSKTKP) are enriched in polar residues. The region spanning 220–546 (DYQPLSVLLP…RAMVAMGKFL (327 aa)) is the Peptidase M14 domain. The Zn(2+) site is built by H285 and E288. Substrate contacts are provided by residues 285 to 288 (HARE), R343, and 360 to 361 (DH). C354 and C377 are joined by a disulfide. Residue N370 is glycosylated (N-linked (GlcNAc...) asparagine). H417 serves as a coordination point for Zn(2+). Position 418 to 419 (418 to 419 (SY)) interacts with substrate. Positions 557-593 (NGPHAAEETQNYDDDFEEDEAEEDSDVFRAQGDDMSS) are disordered. Residues 566–581 (QNYDDDFEEDEAEEDS) are compositionally biased toward acidic residues.

The protein belongs to the peptidase M14 family. It depends on Zn(2+) as a cofactor.

It is found in the vacuole. Its subcellular location is the secreted. Functionally, inactive carboxypeptidase that may play a role in cell wall organization and biogenesis. This is Inactive metallocarboxypeptidase ECM14 (ECM14) from Arthroderma gypseum (strain ATCC MYA-4604 / CBS 118893) (Microsporum gypseum).